A 271-amino-acid chain; its full sequence is Uridine-cytidine kinase 1-A (271 aa).

24 to 32 provides a ligand contact to ATP; that stretch reads GGTASGKST. Substrate-binding residues include aspartate 81, tyrosine 109, histidine 114, arginine 163, arginine 172, and glutamine 180. An ATP-binding site is contributed by aspartate 209. A disordered region spans residues 241 to 271; sequence SQKRTFPGQGESGGLILPGKRTHLESSSRPH. The span at 262–271 shows a compositional bias: basic and acidic residues; the sequence is THLESSSRPH.

The protein belongs to the uridine kinase family.

It catalyses the reaction uridine + ATP = UMP + ADP + H(+). The enzyme catalyses cytidine + ATP = CMP + ADP + H(+). Its pathway is pyrimidine metabolism; CTP biosynthesis via salvage pathway; CTP from cytidine: step 1/3. The protein operates within pyrimidine metabolism; UMP biosynthesis via salvage pathway; UMP from uridine: step 1/1. Its function is as follows. Phosphorylates uridine and cytidine to uridine monophosphate and cytidine monophosphate. Does not phosphorylate deoxyribonucleosides or purine ribonucleosides. Can use ATP or GTP as a phosphate donor. In Xenopus laevis (African clawed frog), this protein is Uridine-cytidine kinase 1-A (uck1-a).